The chain runs to 443 residues: ATP-dependent protease ATPase subunit HslU (443 aa).

Residues I18, 60 to 65 (GVGKTE), D256, E321, and R393 each bind ATP.

It belongs to the ClpX chaperone family. HslU subfamily. A double ring-shaped homohexamer of HslV is capped on each side by a ring-shaped HslU homohexamer. The assembly of the HslU/HslV complex is dependent on binding of ATP.

The protein resides in the cytoplasm. Functionally, ATPase subunit of a proteasome-like degradation complex; this subunit has chaperone activity. The binding of ATP and its subsequent hydrolysis by HslU are essential for unfolding of protein substrates subsequently hydrolyzed by HslV. HslU recognizes the N-terminal part of its protein substrates and unfolds these before they are guided to HslV for hydrolysis. The protein is ATP-dependent protease ATPase subunit HslU of Pasteurella multocida (strain Pm70).